The primary structure comprises 132 residues: Ribosome-binding factor A (132 aa).

Belongs to the RbfA family. As to quaternary structure, monomer. Binds 30S ribosomal subunits, but not 50S ribosomal subunits or 70S ribosomes.

Its subcellular location is the cytoplasm. Functionally, one of several proteins that assist in the late maturation steps of the functional core of the 30S ribosomal subunit. Associates with free 30S ribosomal subunits (but not with 30S subunits that are part of 70S ribosomes or polysomes). Required for efficient processing of 16S rRNA. May interact with the 5'-terminal helix region of 16S rRNA. This is Ribosome-binding factor A from Prochlorococcus marinus (strain MIT 9515).